The chain runs to 152 residues: Protein-export protein SecB (152 aa).

Belongs to the SecB family. Homotetramer, a dimer of dimers. One homotetramer interacts with 1 SecA dimer.

It localises to the cytoplasm. Its function is as follows. One of the proteins required for the normal export of preproteins out of the cell cytoplasm. It is a molecular chaperone that binds to a subset of precursor proteins, maintaining them in a translocation-competent state. It also specifically binds to its receptor SecA. This Rickettsia typhi (strain ATCC VR-144 / Wilmington) protein is Protein-export protein SecB.